The primary structure comprises 179 residues: Oryzines biosynthesis cluster protein J (179 aa).

Residues Y88–T148 form the Cupin type-2 domain.

Belongs to the oryJ family.

Its pathway is secondary metabolite biosynthesis. In terms of biological role, part of the gene cluster that mediates the biosynthesis of oryzines, natural products with an unusual maleidride backbone. The two subunits of the fungal fatty acid synthase oryfasA and oryfasB probably form octenoic acid. This fatty acid is most likely activated by the acyl-CoA ligase oryP to give octenyl-CoA before the citrate synthase-like protein oryE catalyzes condensation with oxaloacetate to form tricarboxylic acid. The next steps of the pathways are conjectural, but a favorite possible route has been proposed, beginning with decarboxylation and concomitant dehydration by the decarboxylase oryM, followed by tautomerization, which may lead to the production of a diene intermediate. Reduction of this diene intermediate could give the known metabolite piliformic acid. On the pathway to oryzine B and oryzine A, however, hydroxylation of the diene by the alpha-ketoglutarate-dependent dioxygenase oryG and lactonisation by the lactonohydrolases oryH or oryL could give oryzine B directly. Finally, enoyl reduction by the dehydrogenase oryD would then convert oryzine B into oryzine A. The protein is Oryzines biosynthesis cluster protein J of Aspergillus oryzae (strain ATCC 42149 / RIB 40) (Yellow koji mold).